Reading from the N-terminus, the 114-residue chain is Cell cycle protein GpsB (114 aa).

A coiled-coil region spans residues 42–77 (YQKMADMNNEVVKLSEENHKLKKELEELRLRVATSR). The segment at 74 to 99 (ATSRPQDNKSFSSNNTTTNTSSNNVD) is disordered. Over residues 85-97 (SSNNTTTNTSSNN) the composition is skewed to low complexity.

This sequence belongs to the GpsB family. As to quaternary structure, forms polymers through the coiled coil domains. Interacts with PBP1, MreC and EzrA.

Its subcellular location is the cytoplasm. Functionally, divisome component that associates with the complex late in its assembly, after the Z-ring is formed, and is dependent on DivIC and PBP2B for its recruitment to the divisome. Together with EzrA, is a key component of the system that regulates PBP1 localization during cell cycle progression. Its main role could be the removal of PBP1 from the cell pole after pole maturation is completed. Also contributes to the recruitment of PBP1 to the division complex. Not essential for septum formation. In Staphylococcus aureus (strain Mu3 / ATCC 700698), this protein is Cell cycle protein GpsB.